Here is a 131-residue protein sequence, read N- to C-terminus: Leptin receptor overlapping transcript-like 1 (131 aa).

The next 4 helical transmembrane spans lie at 7–27, 32–52, 69–89, and 100–120; these read LISL…GCAL, QYWP…YCIA, LAIF…IVFA, and ALVL…FLVF.

Belongs to the OB-RGRP/VPS55 family.

The protein resides in the membrane. Functionally, negatively regulates growth hormone (GH) receptor cell surface expression in liver. May play a role in liver resistance to GH during periods of reduced nutrient availability. The chain is Leptin receptor overlapping transcript-like 1 (LEPROTL1) from Bos taurus (Bovine).